The following is a 283-amino-acid chain: DegV domain-containing protein BH3627 (283 aa).

A DegV domain is found at 4–281 (IAIVTDSTAY…EGSIGLSWYI (278 aa)). Residues Thr62 and Ser95 each coordinate hexadecanoate.

May bind long-chain fatty acids, such as palmitate, and may play a role in lipid transport or fatty acid metabolism. In Halalkalibacterium halodurans (strain ATCC BAA-125 / DSM 18197 / FERM 7344 / JCM 9153 / C-125) (Bacillus halodurans), this protein is DegV domain-containing protein BH3627.